The primary structure comprises 565 residues: Phosphoenolpyruvate-protein phosphotransferase (565 aa).

H191 serves as the catalytic Tele-phosphohistidine intermediate. 2 residues coordinate phosphoenolpyruvate: R289 and R325. Mg(2+) contacts are provided by E427 and D451. Phosphoenolpyruvate contacts are provided by residues N450–D451 and R461. C498 acts as the Proton donor in catalysis.

It belongs to the PEP-utilizing enzyme family. As to quaternary structure, homodimer. Mg(2+) serves as cofactor.

The protein resides in the cytoplasm. The catalysed reaction is L-histidyl-[protein] + phosphoenolpyruvate = N(pros)-phospho-L-histidyl-[protein] + pyruvate. Functionally, general (non sugar-specific) component of the phosphoenolpyruvate-dependent sugar phosphotransferase system (sugar PTS). This major carbohydrate active-transport system catalyzes the phosphorylation of incoming sugar substrates concomitantly with their translocation across the cell membrane. Enzyme I transfers the phosphoryl group from phosphoenolpyruvate (PEP) to the phosphoryl carrier protein (HPr). In Haloferax volcanii (strain ATCC 29605 / DSM 3757 / JCM 8879 / NBRC 14742 / NCIMB 2012 / VKM B-1768 / DS2) (Halobacterium volcanii), this protein is Phosphoenolpyruvate-protein phosphotransferase (ptsI).